The chain runs to 258 residues: Acyl-[acyl-carrier-protein]--UDP-N-acetylglucosamine O-acyltransferase (258 aa).

The protein belongs to the transferase hexapeptide repeat family. LpxA subfamily. Homotrimer.

The protein resides in the cytoplasm. The catalysed reaction is a (3R)-hydroxyacyl-[ACP] + UDP-N-acetyl-alpha-D-glucosamine = a UDP-3-O-[(3R)-3-hydroxyacyl]-N-acetyl-alpha-D-glucosamine + holo-[ACP]. It functions in the pathway glycolipid biosynthesis; lipid IV(A) biosynthesis; lipid IV(A) from (3R)-3-hydroxytetradecanoyl-[acyl-carrier-protein] and UDP-N-acetyl-alpha-D-glucosamine: step 1/6. Functionally, involved in the biosynthesis of lipid A, a phosphorylated glycolipid that anchors the lipopolysaccharide to the outer membrane of the cell. The polypeptide is Acyl-[acyl-carrier-protein]--UDP-N-acetylglucosamine O-acyltransferase (Thiobacillus denitrificans (strain ATCC 25259 / T1)).